The sequence spans 239 residues: 1-(5-phosphoribosyl)-5-[(5-phosphoribosylamino)methylideneamino] imidazole-4-carboxamide isomerase (239 aa).

The active-site Proton acceptor is aspartate 12. Aspartate 132 functions as the Proton donor in the catalytic mechanism.

This sequence belongs to the HisA/HisF family.

It localises to the cytoplasm. The enzyme catalyses 1-(5-phospho-beta-D-ribosyl)-5-[(5-phospho-beta-D-ribosylamino)methylideneamino]imidazole-4-carboxamide = 5-[(5-phospho-1-deoxy-D-ribulos-1-ylimino)methylamino]-1-(5-phospho-beta-D-ribosyl)imidazole-4-carboxamide. It functions in the pathway amino-acid biosynthesis; L-histidine biosynthesis; L-histidine from 5-phospho-alpha-D-ribose 1-diphosphate: step 4/9. The sequence is that of 1-(5-phosphoribosyl)-5-[(5-phosphoribosylamino)methylideneamino] imidazole-4-carboxamide isomerase from Natronomonas pharaonis (strain ATCC 35678 / DSM 2160 / CIP 103997 / JCM 8858 / NBRC 14720 / NCIMB 2260 / Gabara) (Halobacterium pharaonis).